A 715-amino-acid polypeptide reads, in one-letter code: Methylmalonyl-CoA mutase large subunit (715 aa).

Residues tyrosine 70, methionine 73, arginine 77, threonine 80, arginine 82, tyrosine 84, and serine 109 each contribute to the (R)-methylmalonyl-CoA site. The cob(II)alamin site is built by phenylalanine 112 and alanine 134. Positions 190 and 192 each coordinate (R)-methylmalonyl-CoA. Residues valine 201 and arginine 202 each contribute to the cob(II)alamin site. (R)-methylmalonyl-CoA-binding residues include arginine 202, histidine 239, arginine 278, and serine 280. Positions 328, 365, 368, 599, 600, 601, 602, 645, 647, 676, and 699 each coordinate cob(II)alamin. The B12-binding domain maps to 587–715; it reads QPRIMIAKMG…AKVLEILLEE (129 aa).

This sequence belongs to the methylmalonyl-CoA mutase family. Heterodimer of an alpha and a beta chain. Adenosylcob(III)alamin is required as a cofactor.

The enzyme catalyses (R)-methylmalonyl-CoA = succinyl-CoA. Catalyzes the isomerization of succinyl-CoA to methylmalonyl-CoA during synthesis of propionate from tricarboxylic acid-cycle intermediates. In Porphyromonas gingivalis (strain ATCC BAA-308 / W83), this protein is Methylmalonyl-CoA mutase large subunit (mutB).